We begin with the raw amino-acid sequence, 415 residues long: Gamma-glutamyl phosphate reductase (415 aa).

It belongs to the gamma-glutamyl phosphate reductase family.

The protein localises to the cytoplasm. It catalyses the reaction L-glutamate 5-semialdehyde + phosphate + NADP(+) = L-glutamyl 5-phosphate + NADPH + H(+). It functions in the pathway amino-acid biosynthesis; L-proline biosynthesis; L-glutamate 5-semialdehyde from L-glutamate: step 2/2. In terms of biological role, catalyzes the NADPH-dependent reduction of L-glutamate 5-phosphate into L-glutamate 5-semialdehyde and phosphate. The product spontaneously undergoes cyclization to form 1-pyrroline-5-carboxylate. This is Gamma-glutamyl phosphate reductase from Shouchella clausii (strain KSM-K16) (Alkalihalobacillus clausii).